The chain runs to 480 residues: Major capsid protein (480 aa).

The protein resides in the virion. Major protein of the capsid. The polypeptide is Major capsid protein (MCP-1) (Trichoplusia ni ascovirus 2c (TnAV-2c)).